A 224-amino-acid polypeptide reads, in one-letter code: Phosphoribosyltransferase domain-containing protein 1 (224 aa).

Mg(2+) contacts are provided by E140 and D141. Residues 140 to 148 (EDIINTGRT), K172, 193 to 194 (FV), and D200 contribute to the GMP site. A Mg(2+)-binding site is contributed by D200.

Belongs to the purine/pyrimidine phosphoribosyltransferase family.

In Xenopus laevis (African clawed frog), this protein is Phosphoribosyltransferase domain-containing protein 1 (prtfdc1).